Consider the following 258-residue polypeptide: Transmembrane O-methyltransferase homolog (258 aa).

S-adenosyl-L-methionine-binding positions include E104, 106-107 (GT), S112, E130, and S160.

This sequence belongs to the class I-like SAM-binding methyltransferase superfamily. Cation-dependent O-methyltransferase family. In terms of assembly, interacts with LHFPL5, PCDH15, TMC1, TMC2 and TMIE. The interaction of TOMT with TMC1 and TMC2 is required for the transportation of TMC1/2 into the stereocilia of hair cells. Interacts directly with TMC1. Widely expressed with high levels in outer and inner hair cells of the cochlea and vestibule.

It is found in the cytoplasm. The protein resides in the endoplasmic reticulum. The enzyme catalyses a catechol + S-adenosyl-L-methionine = a guaiacol + S-adenosyl-L-homocysteine + H(+). Functionally, catalyzes the O-methylation, and thereby the inactivation, of catecholamine neurotransmitters and catechol hormones. Required for auditory function. Component of the cochlear hair cell's mechanotransduction (MET) machinery. Involved in the assembly of the asymmetric tip-link MET complex. Required for transportation of TMC1 and TMC2 proteins into the mechanically sensitive stereocilia of the hair cells. The function in MET is independent of the enzymatic activity. This is Transmembrane O-methyltransferase homolog from Mus musculus (Mouse).